The following is a 452-amino-acid chain: Probable alpha-galactosidase B (452 aa).

The first 24 residues, 1-24 (MLHRATTTAAAAAAAALLLCPVQA), serve as a signal peptide directing secretion. Cys-47 and Cys-79 are joined by a disulfide. Residues Asn-87 and Asn-138 are each glycosylated (N-linked (GlcNAc...) asparagine). The cysteines at positions 129 and 159 are disulfide-linked. Asp-157 serves as the catalytic Nucleophile. The N-linked (GlcNAc...) asparagine glycan is linked to Asn-184. Substrate is bound at residue 231-235 (DWGQA). Asp-253 serves as the catalytic Proton donor. 4 N-linked (GlcNAc...) asparagine glycosylation sites follow: Asn-292, Asn-391, Asn-409, and Asn-410.

The protein belongs to the glycosyl hydrolase 27 family.

Its subcellular location is the secreted. It carries out the reaction Hydrolysis of terminal, non-reducing alpha-D-galactose residues in alpha-D-galactosides, including galactose oligosaccharides, galactomannans and galactolipids.. Its function is as follows. Hydrolyzes a variety of simple alpha-D-galactoside as well as more complex molecules such as oligosaccharides and polysaccharides. In Talaromyces emersonii (Thermophilic fungus), this protein is Probable alpha-galactosidase B.